The chain runs to 367 residues: Alpha-2-HS-glycoprotein (367 aa).

The signal sequence occupies residues 1-18; the sequence is MKSLVLLLCLAQLWGCHS. Residues 27–133 enclose the Cystatin fetuin-A-type 1 domain; the sequence is YRQPNCDDPE…KFSVVYAKCD (107 aa). 6 disulfide bridges follow: Cys32-Cys358, Cys89-Cys100, Cys114-Cys132, Cys146-Cys149, Cys208-Cys219, and Cys230-Cys247. A Phosphoserine modification is found at Ser134. Ser135 and Ser138 each carry phosphoserine; by FAM20C. Residues 144 to 255 form the Cystatin fetuin-A-type 2 domain; the sequence is KVCQDCPLLA…TCMVFQTQPV (112 aa). N-linked (GlcNAc...) (complex) asparagine glycans are attached at residues Asn156 and Asn176. The interval 255–298 is disordered; it reads VSSQPQPEGANEAVPTPVVDPDAPPSPPLGAPGLPPAGSPPDSH. Thr270 carries O-linked (GalNAc...) threonine glycosylation. Residues 276-293 show a composition bias toward pro residues; the sequence is DAPPSPPLGAPGLPPAGS. O-linked (GalNAc...) serine glycans are attached at residues Ser280 and Ser293. A propeptide spans 301–340 (connecting peptide); the sequence is LAAPPGHQLHRAHYDLRHTFMGVVSLGSPSGEVSHPRKTR. Phosphothreonine; by FAM20C is present on Thr319. Phosphoserine; by FAM20C is present on residues Ser325, Ser328, and Ser330. O-linked (GalNAc...) threonine glycans are attached at residues Thr339 and Thr341. Ser346 carries O-linked (GalNAc...) serine glycosylation.

This sequence belongs to the fetuin family. As to quaternary structure, alpha-2-HS glycoprotein derives from this precursor, when the connecting peptide is cleaved off. The two chains A and B are held together by a single disulfide bond. Post-translationally, phosphorylated by FAM20C in the extracellular medium. O- and N-glycosylated. O-glycosylated with core 1 or possibly core 8 glycans. N-glycan at Asn-156: Hex5HexNAc4; N-glycan heterogeneity at Asn-176: Hex5HexNAc4 (major) and Hex6HexNAc5 (minor). Synthesized in liver and selectively concentrated in bone matrix. Secreted in plasma. It is also found in dentin in much higher quantities than other plasma proteins.

The protein resides in the secreted. Its function is as follows. Promotes endocytosis, possesses opsonic properties and influences the mineral phase of bone. Shows affinity for calcium and barium ions. This chain is Alpha-2-HS-glycoprotein (AHSG), found in Homo sapiens (Human).